We begin with the raw amino-acid sequence, 417 residues long: NADH-quinone oxidoreductase subunit D (417 aa).

It belongs to the complex I 49 kDa subunit family. As to quaternary structure, NDH-1 is composed of 14 different subunits. Subunits NuoB, C, D, E, F, and G constitute the peripheral sector of the complex.

The protein localises to the cell inner membrane. The enzyme catalyses a quinone + NADH + 5 H(+)(in) = a quinol + NAD(+) + 4 H(+)(out). NDH-1 shuttles electrons from NADH, via FMN and iron-sulfur (Fe-S) centers, to quinones in the respiratory chain. The immediate electron acceptor for the enzyme in this species is believed to be ubiquinone. Couples the redox reaction to proton translocation (for every two electrons transferred, four hydrogen ions are translocated across the cytoplasmic membrane), and thus conserves the redox energy in a proton gradient. This chain is NADH-quinone oxidoreductase subunit D, found in Ralstonia pickettii (strain 12J).